The following is a 126-amino-acid chain: Flagellar protein FliT (126 aa).

The tract at residues 1–50 (MVSPHRLLKDYQQLLSLSQKILHLAISGQWDTLVEQEIVYVQSVEGLVNT) is required for homodimerization. The fliD binding stretch occupies residues 60 to 98 (MRLHLRQILQEVMDNEAKVKQLLQKRMDELSSLMGQSLK).

This sequence belongs to the FliT family. As to quaternary structure, homodimer. Interacts with FliD and FlhC.

The protein localises to the cytoplasm. It is found in the cytosol. Functionally, dual-function protein that regulates the transcription of class 2 flagellar operons and that also acts as an export chaperone for the filament-capping protein FliD. As a transcriptional regulator, acts as an anti-FlhDC factor; it directly binds FlhC, thus inhibiting the binding of the FlhC/FlhD complex to class 2 promoters, resulting in decreased expression of class 2 flagellar operons. As a chaperone, effects FliD transition to the membrane by preventing its premature polymerization, and by directing it to the export apparatus. The chain is Flagellar protein FliT from Pectobacterium atrosepticum (strain SCRI 1043 / ATCC BAA-672) (Erwinia carotovora subsp. atroseptica).